An 877-amino-acid polypeptide reads, in one-letter code: Leucine--tRNA ligase (877 aa).

The 'HIGH' region motif lies at 43–53; sequence PYPSGRIHMGH. A 'KMSKS' region motif is present at residues 628–632; sequence KMSKS. Residue Lys-631 participates in ATP binding.

The protein belongs to the class-I aminoacyl-tRNA synthetase family.

It localises to the cytoplasm. The catalysed reaction is tRNA(Leu) + L-leucine + ATP = L-leucyl-tRNA(Leu) + AMP + diphosphate. This is Leucine--tRNA ligase from Brucella suis biovar 1 (strain 1330).